Reading from the N-terminus, the 1138-residue chain is Pesticidal crystal protein Cry7Ab (1138 aa).

It belongs to the delta endotoxin family.

Promotes colloidosmotic lysis by binding to the midgut epithelial cells of Coleoptera. The chain is Pesticidal crystal protein Cry7Ab (cry7Ab) from Bacillus thuringiensis subsp. dakota.